The sequence spans 262 residues: Hydroxyethylthiazole kinase (262 aa).

Met-44 serves as a coordination point for substrate. Arg-118 and Ser-166 together coordinate ATP. Residue Gly-193 participates in substrate binding.

This sequence belongs to the Thz kinase family. It depends on Mg(2+) as a cofactor.

It catalyses the reaction 5-(2-hydroxyethyl)-4-methylthiazole + ATP = 4-methyl-5-(2-phosphooxyethyl)-thiazole + ADP + H(+). The protein operates within cofactor biosynthesis; thiamine diphosphate biosynthesis; 4-methyl-5-(2-phosphoethyl)-thiazole from 5-(2-hydroxyethyl)-4-methylthiazole: step 1/1. Catalyzes the phosphorylation of the hydroxyl group of 4-methyl-5-beta-hydroxyethylthiazole (THZ). This is Hydroxyethylthiazole kinase from Chlamydia abortus (strain DSM 27085 / S26/3) (Chlamydophila abortus).